A 427-amino-acid polypeptide reads, in one-letter code: Glutamate-1-semialdehyde 2,1-aminomutase (427 aa).

An N6-(pyridoxal phosphate)lysine modification is found at Lys-267.

The protein belongs to the class-III pyridoxal-phosphate-dependent aminotransferase family. HemL subfamily. In terms of assembly, homodimer. Pyridoxal 5'-phosphate serves as cofactor.

The protein resides in the cytoplasm. It catalyses the reaction (S)-4-amino-5-oxopentanoate = 5-aminolevulinate. It functions in the pathway porphyrin-containing compound metabolism; protoporphyrin-IX biosynthesis; 5-aminolevulinate from L-glutamyl-tRNA(Glu): step 2/2. The chain is Glutamate-1-semialdehyde 2,1-aminomutase from Geobacter metallireducens (strain ATCC 53774 / DSM 7210 / GS-15).